The following is a 498-amino-acid chain: ATP synthase subunit beta, chloroplastic (498 aa).

172–179 (GGAGVGKT) lines the ATP pocket.

This sequence belongs to the ATPase alpha/beta chains family. As to quaternary structure, F-type ATPases have 2 components, CF(1) - the catalytic core - and CF(0) - the membrane proton channel. CF(1) has five subunits: alpha(3), beta(3), gamma(1), delta(1), epsilon(1). CF(0) has four main subunits: a(1), b(1), b'(1) and c(9-12).

Its subcellular location is the plastid. The protein resides in the chloroplast thylakoid membrane. It carries out the reaction ATP + H2O + 4 H(+)(in) = ADP + phosphate + 5 H(+)(out). Produces ATP from ADP in the presence of a proton gradient across the membrane. The catalytic sites are hosted primarily by the beta subunits. This Salacca zalacca (Snake palm) protein is ATP synthase subunit beta, chloroplastic.